The chain runs to 243 residues: Uridylate kinase (243 aa).

Position 15–18 (15–18 (KMSG)) interacts with ATP. A UMP-binding site is contributed by Gly-57. ATP-binding residues include Gly-58 and Arg-62. UMP-binding positions include Asp-77 and 138–145 (TGNPLVTT). Thr-165, Asn-166, Tyr-171, and Asp-174 together coordinate ATP.

Belongs to the UMP kinase family. Homohexamer.

It localises to the cytoplasm. The enzyme catalyses UMP + ATP = UDP + ADP. It participates in pyrimidine metabolism; CTP biosynthesis via de novo pathway; UDP from UMP (UMPK route): step 1/1. Inhibited by UTP. Catalyzes the reversible phosphorylation of UMP to UDP. The sequence is that of Uridylate kinase from Coxiella burnetii (strain RSA 493 / Nine Mile phase I).